Here is a 248-residue protein sequence, read N- to C-terminus: Mannose-binding protein C (248 aa).

A signal peptide spans 1-20 (MSPFLSLPLLLLSVLSASYS). Residues 36–112 (IACSSPGING…GDSSLAASER (77 aa)) form a disordered region. The 58-residue stretch at 42–99 (GINGFPGKDGRDGTKGEKGEPGQGLRGLQGPPGKLGPPGNPGPSGSPGAKGQKGDPGA) folds into the Collagen-like domain. Position 47 is a 4-hydroxyproline (P47). Residues 49 to 61 (KDGRDGTKGEKGE) show a composition bias toward basic and acidic residues. P73, P79, P82, and P88 each carry 4-hydroxyproline. Residues 112–130 (RKALQTEMARIKKWVTFSL) are a coiled coil. One can recognise a C-type lectin domain in the interval 134-245 (VGKKLFLSNG…CSSSHLAICE (112 aa)). 2 cysteine pairs are disulfide-bonded: C155–C244 and C222–C236.

In terms of assembly, oligomeric complex of 3 or more homotrimers. Interacts with MASP1 and MASP2. Interacts with MEP1A and MEP1B and may inhibit their catalytic activity. In terms of processing, hydroxylation on proline residues within the sequence motif, GXPG, is most likely to be 4-hydroxy as this fits the requirement for 4-hydroxylation in vertebrates.

Its subcellular location is the secreted. Functionally, calcium-dependent lectin involved in innate immune defense. Binds mannose, fucose and N-acetylglucosamine on different microorganisms and activates the lectin complement pathway. Binds to late apoptotic cells, as well as to apoptotic blebs and to necrotic cells, but not to early apoptotic cells, facilitating their uptake by macrophages. This is Mannose-binding protein C (MBL2) from Saguinus oedipus (Cotton-top tamarin).